Reading from the N-terminus, the 285-residue chain is UPF0014 membrane protein STAR2 (285 aa).

7 consecutive transmembrane segments (helical) span residues 30 to 50, 64 to 84, 88 to 108, 119 to 139, 148 to 168, 203 to 225, and 240 to 262; these read FLVG…AVAL, YAMA…QFIF, SAAW…YTAG, HIAA…LVAL, YIIP…GVTM, SLVI…ALPG, and AIQL…SILS.

This sequence belongs to the UPF0014 family. As to quaternary structure, interacts with STAR2. Expressed in roots.

The protein resides in the membrane. Associates with STAR2 to form a functional transmembrane ABC transporter required for detoxification of aluminum (Al) in roots. Can specifically transport UDP-glucose. The polypeptide is UPF0014 membrane protein STAR2 (Oryza sativa subsp. japonica (Rice)).